Reading from the N-terminus, the 128-residue chain is Translation initiation factor 5A (128 aa).

Lys-35 carries the hypusine modification.

This sequence belongs to the eIF-5A family.

The protein resides in the cytoplasm. Functions by promoting the formation of the first peptide bond. This is Translation initiation factor 5A from Methanosarcina barkeri (strain Fusaro / DSM 804).